A 189-amino-acid polypeptide reads, in one-letter code: Peptidyl-tRNA hydrolase (189 aa).

Y14 is a binding site for tRNA. Residue H19 is the Proton acceptor of the active site. Residues Y64, N66, and N112 each coordinate tRNA.

Belongs to the PTH family. Monomer.

The protein resides in the cytoplasm. It catalyses the reaction an N-acyl-L-alpha-aminoacyl-tRNA + H2O = an N-acyl-L-amino acid + a tRNA + H(+). In terms of biological role, hydrolyzes ribosome-free peptidyl-tRNAs (with 1 or more amino acids incorporated), which drop off the ribosome during protein synthesis, or as a result of ribosome stalling. Functionally, catalyzes the release of premature peptidyl moieties from peptidyl-tRNA molecules trapped in stalled 50S ribosomal subunits, and thus maintains levels of free tRNAs and 50S ribosomes. The protein is Peptidyl-tRNA hydrolase of Finegoldia magna (strain ATCC 29328 / DSM 20472 / WAL 2508) (Peptostreptococcus magnus).